Reading from the N-terminus, the 466-residue chain is GTPase Der (466 aa).

2 EngA-type G domains span residues 3–167 (PTLV…PDEP) and 176–350 (PKIA…GAAM). GTP is bound by residues 9–16 (GRSNVGKS), 56–60 (DTGGF), 119–122 (NKTE), 182–189 (GRPNVGKS), 229–233 (DTAGL), and 294–297 (NKWD). The region spanning 351–435 (AHLPTPRLTR…PLRIEFRTGR (85 aa)) is the KH-like domain. The disordered stretch occupies residues 433-466 (TGRNPYAGKSPAPLTEAEAKRAHRRRRYGRKKYG). Positions 453 to 466 (RAHRRRRYGRKKYG) are enriched in basic residues.

It belongs to the TRAFAC class TrmE-Era-EngA-EngB-Septin-like GTPase superfamily. EngA (Der) GTPase family. Associates with the 50S ribosomal subunit.

In terms of biological role, GTPase that plays an essential role in the late steps of ribosome biogenesis. This Nitrosospira multiformis (strain ATCC 25196 / NCIMB 11849 / C 71) protein is GTPase Der.